Consider the following 236-residue polypeptide: Flagellar L-ring protein (236 aa).

Positions methionine 1–alanine 24 are cleaved as a signal peptide. Residue cysteine 25 is the site of N-palmitoyl cysteine attachment. Cysteine 25 carries S-diacylglycerol cysteine lipidation.

This sequence belongs to the FlgH family. In terms of assembly, the basal body constitutes a major portion of the flagellar organelle and consists of four rings (L,P,S, and M) mounted on a central rod.

It is found in the cell outer membrane. The protein resides in the bacterial flagellum basal body. Its function is as follows. Assembles around the rod to form the L-ring and probably protects the motor/basal body from shearing forces during rotation. This chain is Flagellar L-ring protein, found in Colwellia psychrerythraea (strain 34H / ATCC BAA-681) (Vibrio psychroerythus).